The chain runs to 334 residues: Ornithine carbamoyltransferase (334 aa).

Residues 57–60, glutamine 84, arginine 108, and 135–138 each bind carbamoyl phosphate; these read STRT and HPTQ. Residues asparagine 169, aspartate 233, and 237 to 238 each bind L-ornithine; that span reads SM. Residues 275 to 276 and arginine 320 each bind carbamoyl phosphate; that span reads CL.

This sequence belongs to the aspartate/ornithine carbamoyltransferase superfamily. OTCase family.

It localises to the cytoplasm. The enzyme catalyses carbamoyl phosphate + L-ornithine = L-citrulline + phosphate + H(+). It participates in amino-acid biosynthesis; L-arginine biosynthesis; L-arginine from L-ornithine and carbamoyl phosphate: step 1/3. Reversibly catalyzes the transfer of the carbamoyl group from carbamoyl phosphate (CP) to the N(epsilon) atom of ornithine (ORN) to produce L-citrulline. This Aliivibrio fischeri (strain ATCC 700601 / ES114) (Vibrio fischeri) protein is Ornithine carbamoyltransferase.